A 408-amino-acid chain; its full sequence is MIDTIAIIGAGLAGSTAARALRAQGYEGRIHLLGDESHQAYDRTTLSKTVLAGEQPEPPAILDSAWYASAHVDVQLGRRVSCLDLANRQIQFESGAPLAYDRLLLATGARARRMAIRGGDLAGIHTLRDLADSQALRQALQPGQSLVIVGGGLIGCEVATTARKLSVHVTILEAGDELLVRVLGHRTGAWCRAELERMGVRVERNAQAARFEGQGQVRAVICADGRRVPADVVLVSIGAEPADELARAAGIACARGVLVDATGATSCPEVFAAGDVAAWPLRQGGQRSLETYLNSQMEAEIAASAMLSQPVPAPQVPTSWTEIAGHRIQMIGDAEGPGEIVVRGDAQSGQPIVLLRLLDGCVEAATAINATREFSVATRLVGTRVSVSAEQLQDVGSNLRDLLKAKPN.

4 to 35 provides a ligand contact to FAD; that stretch reads TIAIIGAGLAGSTAARALRAQGYEGRIHLLGD. An NAD(+)-binding site is contributed by 145-173; sequence SLVIVGGGLIGCEVATTARKLSVHVTILE.

It belongs to the bacterial ring-hydroxylating dioxygenase ferredoxin reductase family. In terms of assembly, this dioxygenase system consists of four proteins: the two subunits of the hydroxylase component (BphA and BphE), a ferredoxin (BphF) and a ferredoxin reductase (BphG). FAD is required as a cofactor.

It carries out the reaction 2 reduced [2Fe-2S]-[ferredoxin] + NAD(+) + H(+) = 2 oxidized [2Fe-2S]-[ferredoxin] + NADH. It participates in xenobiotic degradation; biphenyl degradation. Part of the electron transfer component of biphenyl dioxygenase, transfers electrons from ferredoxin (BphF) to NADH. The protein is Biphenyl dioxygenase system ferredoxin--NAD(+) reductase component (bphG) of Paraburkholderia xenovorans (strain LB400).